A 440-amino-acid polypeptide reads, in one-letter code: C-terminal-binding protein 1 (440 aa).

Positions 1–70 are interaction with GLIS2 1; that stretch reads MGSSHLLNKG…EIHEKVLNEA (70 aa). Residues Ser-100, 180 to 185, Asp-204, 237 to 243, 264 to 266, and Asp-290 each bind NAD(+); these read IGLGRV, CGLNEHN, and TAR. Residue Arg-266 is part of the active site. The interaction with GLIS2 2 stretch occupies residues 288–360; that stretch reads ALDVHESEPF…VNKDHLTAAT (73 aa). Residue Glu-295 is part of the active site. Ser-300 is modified (phosphoserine). Residue His-315 is the Proton donor of the active site. Residue 315-318 participates in NAD(+) binding; it reads HAAW. A disordered region spans residues 408–440; the sequence is SHGLPPVAHPPHAPSPGQTVKPEADRDHASDQL. Ser-422 is subject to Phosphoserine; by HIPK2. Residue Lys-428 forms a Glycyl lysine isopeptide (Lys-Gly) (interchain with G-Cter in SUMO) linkage. Residues 429–440 show a composition bias toward basic and acidic residues; it reads PEADRDHASDQL.

It belongs to the D-isomer specific 2-hydroxyacid dehydrogenase family. In terms of assembly, homo- or heterodimer. Heterodimer with CTBP2. Interacts with PRDM16; the interaction represses white adipose tissue (WAT)-specific genes expression. Interacts with GLIS2, FOXP2, HDAC4, HDAC5, HDAC9 and ZNF217. Interacts with ELK3 (via its PXDLS motif). Interacts with RBBP8 (via its PXDLS motif); the interaction is disrupted by binding to adenovirus E1A. Interacts with FOXP1, HIPK2, PNN, NRIP1, MECOM, ZFHX1B and WIZ. Interacts with ZNF366 (via PXDLS motif). Interaction with SATB1 (non-acetylated form); the interaction stabilizes its attachment to DNA and promotes transcription repression. Interacts with BCL6; the interaction is required for BCL6 transcriptional autoinhibition and inhibition of some BCL6 target genes. Interacts with IKZF4. Interacts with MCRIP1 (unphosphorylated form, via the PXDLS motif); competitively inhibiting CTBP-ZEB1 interaction. Interacts with Bassoon/BSN; this interaction targets and anchors CTBP1 to presynapses. Interacts with SIMC1. As to quaternary structure, (Microbial infection) Interacts with Epstein-Barr virus EBNA3. Interacts with Epstein-Barr virus EBNA6; this interaction leads to gene repression, but also seems to interfere with the repressive function of CtBP pre-bound to DNA, leading to EBNA6 mediated up-regulation of many cellular genes. (Microbial infection) Interacts with adenovirus E1A protein (via its C-terminus); the interaction disrupts the interaction of CTBP1 with RBBP8. In terms of assembly, (Microbial infection) Interacts with human adenovirus 5 E1A protein; this interaction seems to potentiate viral replication. Requires NAD(+) as cofactor. The level of phosphorylation appears to be regulated during the cell cycle. Phosphorylation by HIPK2 on Ser-422 induces proteasomal degradation. Post-translationally, ADP-ribosylated; when cells are exposed to brefeldin A. In terms of processing, sumoylation on Lys-428 is promoted by the E3 SUMO-protein ligase CBX4. As to expression, expressed in germinal center B-cells.

The protein localises to the cytoplasm. Its subcellular location is the nucleus. Corepressor targeting diverse transcription regulators such as GLIS2 or BCL6. Has dehydrogenase activity. Involved in controlling the equilibrium between tubular and stacked structures in the Golgi complex. Functions in brown adipose tissue (BAT) differentiation. The chain is C-terminal-binding protein 1 (CTBP1) from Homo sapiens (Human).